The following is a 631-amino-acid chain: MNQLTNLSPADLSAQHEQDAKDLTRILPASTKVYIQGSRPDIQVPMRQIALTDTPTGLGGEKNPPVMVYDTSGVYTDPEVAIDLNKGLPHVRQAWIEERQDTDVLDTLSSSFGQERLKDIRTADIRFAHIQKPRRAKTGQNVTQMHYAKKGMITPEMEYIAIRENQRQRDEVDMRQHAGQNFGAKNLTEITPEFVRQEVAAGRAIIPANINHPEIEPMIIGRNFLVKINANIGNSALGSSIDEEVSKMTWATRWGADTIMDLSTGKNIHETREWIIRNSPVPIGTVPIYQALEKVDGVAEDLTWEIFKDTLIEQAEQGVDYFTIHAGVLLRYVPLTANRLTGIVSRGGSIMAQWCLAHHEENFLYTHFDEICEIMKAYDVSFSLGDGLRPGCIQDANDEAQFGELRTLGELTHRAWEHDVQVMIEGPGHVPMHMIKENMDLQLEVCKEAPFYTLGPLTTDIAPGYDHITSAIGAAMIGWYGTAMLCYVTPKEHLGLPNKKDVKDGIITYKIAAHAADLAKGHPGAQVRDNALSKARFEFRWDDQFNLSLDPDTARSMHDETLPKEAHKSAHFCSMCGPKFCSMKITQNVRNYAQNQETAKDFNPSTEEVEQGLKSMKQAYHDNGQKLYQKV.

Substrate is bound by residues N231, M260, Y289, H325, 345 to 347, 386 to 389, and E425; these read SRG and DGLR. H429 provides a ligand contact to Zn(2+). Y452 contributes to the substrate binding site. H493 is a Zn(2+) binding site. [4Fe-4S] cluster-binding residues include C573, C576, and C581.

Belongs to the ThiC family. As to quaternary structure, homodimer. Requires [4Fe-4S] cluster as cofactor.

The enzyme catalyses 5-amino-1-(5-phospho-beta-D-ribosyl)imidazole + S-adenosyl-L-methionine = 4-amino-2-methyl-5-(phosphooxymethyl)pyrimidine + CO + 5'-deoxyadenosine + formate + L-methionine + 3 H(+). The protein operates within cofactor biosynthesis; thiamine diphosphate biosynthesis. Functionally, catalyzes the synthesis of the hydroxymethylpyrimidine phosphate (HMP-P) moiety of thiamine from aminoimidazole ribotide (AIR) in a radical S-adenosyl-L-methionine (SAM)-dependent reaction. This is Phosphomethylpyrimidine synthase from Acinetobacter baylyi (strain ATCC 33305 / BD413 / ADP1).